A 274-amino-acid polypeptide reads, in one-letter code: Phosphatidylglycerol--prolipoprotein diacylglyceryl transferase (274 aa).

A run of 7 helical transmembrane segments spans residues 22-42, 61-81, 96-116, 125-145, 177-197, 204-224, and 238-258; these read LSVRWYGLMYLFGFAFAMWLA, LLFYGFLGVILGGRVGYVLFY, IWTGGMSFHGGLIGVITAMVW, FFTVADFVAPLIPFGLGVGRI, SQLYQFALEGVVLFIILNLFW, GAISGMFLLFYGLFRFLVEFV, and ISMGQILSTPMIIIGALMIWV. Arg-144 lines the a 1,2-diacyl-sn-glycero-3-phospho-(1'-sn-glycerol) pocket.

Belongs to the Lgt family.

It is found in the cell inner membrane. It carries out the reaction L-cysteinyl-[prolipoprotein] + a 1,2-diacyl-sn-glycero-3-phospho-(1'-sn-glycerol) = an S-1,2-diacyl-sn-glyceryl-L-cysteinyl-[prolipoprotein] + sn-glycerol 1-phosphate + H(+). It participates in protein modification; lipoprotein biosynthesis (diacylglyceryl transfer). Its function is as follows. Catalyzes the transfer of the diacylglyceryl group from phosphatidylglycerol to the sulfhydryl group of the N-terminal cysteine of a prolipoprotein, the first step in the formation of mature lipoproteins. This chain is Phosphatidylglycerol--prolipoprotein diacylglyceryl transferase, found in Aeromonas hydrophila subsp. hydrophila (strain ATCC 7966 / DSM 30187 / BCRC 13018 / CCUG 14551 / JCM 1027 / KCTC 2358 / NCIMB 9240 / NCTC 8049).